The chain runs to 629 residues: 1-deoxy-D-xylulose-5-phosphate synthase (629 aa).

Thiamine diphosphate is bound by residues H78 and 119–121 (AHS). Residue D150 coordinates Mg(2+). Thiamine diphosphate is bound by residues 151–152 (GA), N179, Y286, and E368. N179 is a Mg(2+) binding site.

This sequence belongs to the transketolase family. DXPS subfamily. Homodimer. Mg(2+) is required as a cofactor. It depends on thiamine diphosphate as a cofactor.

It catalyses the reaction D-glyceraldehyde 3-phosphate + pyruvate + H(+) = 1-deoxy-D-xylulose 5-phosphate + CO2. It functions in the pathway metabolic intermediate biosynthesis; 1-deoxy-D-xylulose 5-phosphate biosynthesis; 1-deoxy-D-xylulose 5-phosphate from D-glyceraldehyde 3-phosphate and pyruvate: step 1/1. Functionally, catalyzes the acyloin condensation reaction between C atoms 2 and 3 of pyruvate and glyceraldehyde 3-phosphate to yield 1-deoxy-D-xylulose-5-phosphate (DXP). The sequence is that of 1-deoxy-D-xylulose-5-phosphate synthase from Acidovorax sp. (strain JS42).